The following is a 250-amino-acid chain: 3-deoxy-manno-octulosonate cytidylyltransferase (250 aa).

Belongs to the KdsB family.

It is found in the cytoplasm. The enzyme catalyses 3-deoxy-alpha-D-manno-oct-2-ulosonate + CTP = CMP-3-deoxy-beta-D-manno-octulosonate + diphosphate. The protein operates within nucleotide-sugar biosynthesis; CMP-3-deoxy-D-manno-octulosonate biosynthesis; CMP-3-deoxy-D-manno-octulosonate from 3-deoxy-D-manno-octulosonate and CTP: step 1/1. Its pathway is bacterial outer membrane biogenesis; lipopolysaccharide biosynthesis. Activates KDO (a required 8-carbon sugar) for incorporation into bacterial lipopolysaccharide in Gram-negative bacteria. The chain is 3-deoxy-manno-octulosonate cytidylyltransferase from Francisella tularensis subsp. holarctica (strain LVS).